The primary structure comprises 279 residues: MTENDNEVVEVVDDDEAVVSESPVDVDTATEAEADTETDESNETTPTASDAAGDETTTQTGNESADAEPDDELEGPTFDEDVMPDEEADLLIPVEDYLSAGVHIGTQQKTSDMERFIHRVRDDGLYVLDVSQTDSRIRTAANFLANYNPDQMLVTSSRQYGRFPAKKFADAVGARARTGRFIPGTLTNPDYAGYIEPDVVVVTDPIGDAQAVKEAITVGIPVIAMCDSNNQTSNTDLVVPTNNKGRRALSVVYWLLANETLDRRGADSLYALDEFEAEI.

Acidic residues-rich tracts occupy residues M1–V18, T28–N42, and A65–D81. The interval M1–D81 is disordered.

The protein belongs to the universal ribosomal protein uS2 family.

This chain is Small ribosomal subunit protein uS2, found in Haloquadratum walsbyi (strain DSM 16790 / HBSQ001).